A 115-amino-acid chain; its full sequence is T cell receptor beta variable 11-2 (115 aa).

The first 21 residues, 1-21 (MGTRLLCWAALCLLGAELTEA), serve as a signal peptide directing secretion. Residues 22–115 (GVAQSPRYKI…SAVYLCASSL (94 aa)) enclose the Ig-like domain. The cysteines at positions 42 and 111 are disulfide-linked.

Alpha-beta TR is a heterodimer composed of an alpha and beta chain; disulfide-linked. The alpha-beta TR is associated with the transmembrane signaling CD3 coreceptor proteins to form the TR-CD3 (TcR or TCR). The assembly of alpha-beta TR heterodimers with CD3 occurs in the endoplasmic reticulum where a single alpha-beta TR heterodimer associates with one CD3D-CD3E heterodimer, one CD3G-CD3E heterodimer and one CD247 homodimer forming a stable octameric structure. CD3D-CD3E and CD3G-CD3E heterodimers preferentially associate with TR alpha and TR beta chains, respectively. The association of the CD247 homodimer is the last step of TcR assembly in the endoplasmic reticulum and is required for transport to the cell surface.

It is found in the cell membrane. Functionally, v region of the variable domain of T cell receptor (TR) beta chain that participates in the antigen recognition. Alpha-beta T cell receptors are antigen specific receptors which are essential to the immune response and are present on the cell surface of T lymphocytes. Recognize peptide-major histocompatibility (MH) (pMH) complexes that are displayed by antigen presenting cells (APC), a prerequisite for efficient T cell adaptive immunity against pathogens. Binding of alpha-beta TR to pMH complex initiates TR-CD3 clustering on the cell surface and intracellular activation of LCK that phosphorylates the ITAM motifs of CD3G, CD3D, CD3E and CD247 enabling the recruitment of ZAP70. In turn ZAP70 phosphorylates LAT, which recruits numerous signaling molecules to form the LAT signalosome. The LAT signalosome propagates signal branching to three major signaling pathways, the calcium, the mitogen-activated protein kinase (MAPK) kinase and the nuclear factor NF-kappa-B (NF-kB) pathways, leading to the mobilization of transcription factors that are critical for gene expression and essential for T cell growth and differentiation. The T cell repertoire is generated in the thymus, by V-(D)-J rearrangement. This repertoire is then shaped by intrathymic selection events to generate a peripheral T cell pool of self-MH restricted, non-autoaggressive T cells. Post-thymic interaction of alpha-beta TR with the pMH complexes shapes TR structural and functional avidity. The protein is T cell receptor beta variable 11-2 of Homo sapiens (Human).